The primary structure comprises 592 residues: Putative uric acid sigma-54-dependent transcriptional regulator UacR (592 aa).

A PAS domain is found at 158–229 (ISKIFATMID…HMQHIVSWDD (72 aa)). The region spanning 272-502 (LVGECRVMRQ…LSNLMEYLVN (231 aa)) is the Sigma-54 factor interaction domain. Residues 300 to 307 (GESGTGKE) and 364 to 373 (ANTGTLFLDE) each bind ATP. The H-T-H motif DNA-binding region spans 567–585 (KQVADELGIGIATLYRKIK).

In terms of biological role, essential for both formate-dependent and formate-independent uric acid degradation. May be directly involved in the transcription of uacF in response to hypoxanthine, xanthine, and uric acid. In Escherichia coli (strain K12), this protein is Putative uric acid sigma-54-dependent transcriptional regulator UacR.